Reading from the N-terminus, the 117-residue chain is MDLIQTLEQEEIARLNKTIPAFAPGDTVIVSVNVVEGTRKRLQAYEGVVIAKRNRGLNSSFIVRKISSGEGVERTFQLYSPLIASIEVKRRGDVRRAKLYYLRQRSGKSARIKEKLA.

Belongs to the bacterial ribosomal protein bL19 family.

Functionally, this protein is located at the 30S-50S ribosomal subunit interface and may play a role in the structure and function of the aminoacyl-tRNA binding site. The polypeptide is Large ribosomal subunit protein bL19 (Methylibium petroleiphilum (strain ATCC BAA-1232 / LMG 22953 / PM1)).